A 201-amino-acid polypeptide reads, in one-letter code: ATP-dependent Clp protease proteolytic subunit 2 (201 aa).

Catalysis depends on serine 101, which acts as the Nucleophile. The active site involves histidine 126.

The protein belongs to the peptidase S14 family. In terms of assembly, fourteen ClpP subunits assemble into 2 heptameric rings which stack back to back to give a disk-like structure with a central cavity, resembling the structure of eukaryotic proteasomes.

Its subcellular location is the cytoplasm. The catalysed reaction is Hydrolysis of proteins to small peptides in the presence of ATP and magnesium. alpha-casein is the usual test substrate. In the absence of ATP, only oligopeptides shorter than five residues are hydrolyzed (such as succinyl-Leu-Tyr-|-NHMec, and Leu-Tyr-Leu-|-Tyr-Trp, in which cleavage of the -Tyr-|-Leu- and -Tyr-|-Trp bonds also occurs).. Its function is as follows. Cleaves peptides in various proteins in a process that requires ATP hydrolysis. Has a chymotrypsin-like activity. Plays a major role in the degradation of misfolded proteins. The protein is ATP-dependent Clp protease proteolytic subunit 2 of Prochlorococcus marinus subsp. pastoris (strain CCMP1986 / NIES-2087 / MED4).